A 531-amino-acid chain; its full sequence is tRNA(Ile)-lysidine synthase (531 aa).

32–37 is an ATP binding site; sequence SGGMDS.

Belongs to the tRNA(Ile)-lysidine synthase family.

The protein resides in the cytoplasm. It catalyses the reaction cytidine(34) in tRNA(Ile2) + L-lysine + ATP = lysidine(34) in tRNA(Ile2) + AMP + diphosphate + H(+). Its function is as follows. Ligates lysine onto the cytidine present at position 34 of the AUA codon-specific tRNA(Ile) that contains the anticodon CAU, in an ATP-dependent manner. Cytidine is converted to lysidine, thus changing the amino acid specificity of the tRNA from methionine to isoleucine. The sequence is that of tRNA(Ile)-lysidine synthase from Blochmanniella floridana.